Reading from the N-terminus, the 500-residue chain is Glycerol kinase (500 aa).

Residue threonine 12 participates in ADP binding. Threonine 12, threonine 13, and serine 14 together coordinate ATP. Threonine 12 is a binding site for sn-glycerol 3-phosphate. Arginine 16 is a binding site for ADP. Sn-glycerol 3-phosphate is bound by residues arginine 82, glutamate 83, tyrosine 135, and aspartate 245. Residues arginine 82, glutamate 83, tyrosine 135, aspartate 245, and glutamine 246 each contribute to the glycerol site. The ADP site is built by threonine 267 and glycine 310. Threonine 267, glycine 310, glutamine 314, and glycine 411 together coordinate ATP. ADP is bound by residues glycine 411 and asparagine 415.

The protein belongs to the FGGY kinase family. In terms of assembly, homotetramer and homodimer (in equilibrium).

It carries out the reaction glycerol + ATP = sn-glycerol 3-phosphate + ADP + H(+). Its pathway is polyol metabolism; glycerol degradation via glycerol kinase pathway; sn-glycerol 3-phosphate from glycerol: step 1/1. With respect to regulation, activated by phosphorylation and inhibited by fructose 1,6-bisphosphate (FBP). Functionally, key enzyme in the regulation of glycerol uptake and metabolism. Catalyzes the phosphorylation of glycerol to yield sn-glycerol 3-phosphate. The protein is Glycerol kinase of Clostridium perfringens (strain SM101 / Type A).